The sequence spans 442 residues: MSEIGSYHDTIFALSSGRLPSGVAVIRISGPKTRFVYETICQAIPEPRHAALLTFRSRNGDAIDRGLTLFFPAPHSFTGEDCAEFHLHGGKAVVEKMLAVLGELPGCRIAEAGEFTRRAFANGKMDLTIAEGLADLIAAETEGQRRLAMQVASGNQRKLYSEWRQRLINARAFIEAELDFADESDVPGSVSMQVWQQLSALKHEIEHHIASGKRAAMLRDGLHVVIVGAPNAGKSSLLNFLAGRDVAIISKEAGTTRDLLEVKLDLGGIPVYVTDTAGLRETDSVVEKIGIERARARMAEADLVLSLEDMSGPVSVTVEKIEAETWLIGTKADLGGSASGLWKYHISTMTGSGLEQLLDALQAFAEAKIGQIEDAVPTRQRHINLLRATIEEIEKAIEGDDLPLELRAENMRLASQFLGRITGDVDVEEILDVIFSQFCIGK.

Arginine 27, glutamate 84, and lysine 124 together coordinate (6S)-5-formyl-5,6,7,8-tetrahydrofolate. Residues 221-366 (GLHVVIVGAP…LLDALQAFAE (146 aa)) form the TrmE-type G domain. GTP contacts are provided by residues 231–236 (NAGKSS), 250–256 (SKEAGTT), and 275–278 (DTAG). Residues serine 235 and threonine 256 each contribute to the Mg(2+) site. Lysine 442 contributes to the (6S)-5-formyl-5,6,7,8-tetrahydrofolate binding site.

Belongs to the TRAFAC class TrmE-Era-EngA-EngB-Septin-like GTPase superfamily. TrmE GTPase family. As to quaternary structure, homodimer. Heterotetramer of two MnmE and two MnmG subunits. K(+) is required as a cofactor.

The protein localises to the cytoplasm. Functionally, exhibits a very high intrinsic GTPase hydrolysis rate. Involved in the addition of a carboxymethylaminomethyl (cmnm) group at the wobble position (U34) of certain tRNAs, forming tRNA-cmnm(5)s(2)U34. This chain is tRNA modification GTPase MnmE, found in Brucella suis biovar 1 (strain 1330).